Consider the following 428-residue polypeptide: Cyclic AMP-responsive element-binding protein 3-like protein 3-A (428 aa).

Residues methionine 1–glutamine 286 are Cytoplasmic-facing. The segment covering valine 67–serine 83 has biased composition (low complexity). The tract at residues valine 67–proline 104 is disordered. Residues serine 93–glutamate 103 are compositionally biased toward pro residues. One can recognise a bZIP domain in the interval isoleucine 210 to leucine 273. The segment at lysine 212–arginine 241 is basic motif. Residues leucine 252–leucine 273 form a leucine-zipper region. The chain crosses the membrane as a helical; Signal-anchor for type II membrane protein span at residues alanine 287–leucine 303. Residues proline 304–methionine 428 lie on the Lumenal side of the membrane. Positions threonine 381–methionine 428 are disordered. The span at proline 385–aspartate 402 shows a compositional bias: basic and acidic residues. Residue asparagine 389 is glycosylated (N-linked (GlcNAc...) asparagine).

Belongs to the bZIP family. ATF subfamily. Binds DNA as a dimer. Controlled by regulated intramembrane proteolysis (RIP). A fragment containing the cytoplasmic transcription factor domain is released by proteolysis. The cleavage seems to be performed sequentially by site-1 and site-2 proteases.

Its subcellular location is the endoplasmic reticulum membrane. It is found in the nucleus. Functionally, transcriptional activator. Binds the cAMP response element (CRE). Activates transcription through box-B element and CRE. Seems to function synergistically with atf6. Regulates FGF21 transcription. The chain is Cyclic AMP-responsive element-binding protein 3-like protein 3-A (creb3l3a) from Danio rerio (Zebrafish).